We begin with the raw amino-acid sequence, 254 residues long: Persulfide dioxygenase ETHE1, mitochondrial (254 aa).

Residues 1–7 (MAGSVLK) constitute a mitochondrion transit peptide. Residues Ser-14 and Ser-19 each carry the phosphoserine modification. The residue at position 32 (Lys-32) is an N6-acetyllysine; alternate. Lys-32 is subject to N6-succinyllysine; alternate. Lys-66 carries the N6-acetyllysine modification. Fe cation-binding residues include His-79, His-135, and Asp-154.

Belongs to the metallo-beta-lactamase superfamily. Glyoxalase II family. Homodimer. Monomer. Interacts with TST. May interact with RELA. The cofactor is Fe(2+).

The protein localises to the cytoplasm. It is found in the nucleus. Its subcellular location is the mitochondrion matrix. It carries out the reaction S-sulfanylglutathione + O2 + H2O = sulfite + glutathione + 2 H(+). Its activity is regulated as follows. Glutathione increases enzyme activity. Functionally, sulfur dioxygenase that plays an essential role in hydrogen sulfide catabolism in the mitochondrial matrix. Hydrogen sulfide (H(2)S) is first oxidized by SQRDL, giving rise to cysteine persulfide residues. ETHE1 consumes molecular oxygen to catalyze the oxidation of the persulfide, once it has been transferred to a thiophilic acceptor, such as glutathione (R-SSH). Plays an important role in metabolic homeostasis in mitochondria by metabolizing hydrogen sulfide and preventing the accumulation of supraphysiological H(2)S levels that have toxic effects, due to the inhibition of cytochrome c oxidase. First described as a protein that can shuttle between the nucleus and the cytoplasm and suppress p53-induced apoptosis by sequestering the transcription factor RELA/NFKB3 in the cytoplasm and preventing its accumulation in the nucleus. This Bos taurus (Bovine) protein is Persulfide dioxygenase ETHE1, mitochondrial (ETHE1).